The sequence spans 291 residues: Polyamine aminopropyltransferase (291 aa).

Residues 5-245 (PGPIVLMEPL…YAVNFVLGSL (241 aa)) enclose the PABS domain. Residue Gln36 participates in S-methyl-5'-thioadenosine binding. His67 and Glu91 together coordinate spermidine. S-methyl-5'-thioadenosine-binding positions include Asp111 and 143–144 (DG). Catalysis depends on Asp164, which acts as the Proton acceptor.

It belongs to the spermidine/spermine synthase family. In terms of assembly, homodimer or homotetramer.

It localises to the cytoplasm. It carries out the reaction norspermidine + S-adenosyl 3-(methylsulfanyl)propylamine = norspermine + S-methyl-5'-thioadenosine + H(+). It catalyses the reaction S-adenosyl 3-(methylsulfanyl)propylamine + spermidine = thermospermine + S-methyl-5'-thioadenosine + H(+). Functionally, involved in the biosynthesis of polyamines which are thought to support the growth of thermophilic microorganisms under high-temperature conditions. It seems that long-chain and branched-chain of polyamines effectively stabilize DNA and RNA, respectively. Catalyzes the irreversible transfer of a propylamine group from the amino donor S-adenosylmethioninamine (decarboxy-AdoMet) to norspermidine and 1,3-diaminopropane to yield norspermine, and to spermidine to yield thermospermine. It can also synthesize thermospermine from putrescine (1,4-diaminobutane) and caldopentamine from norspermine with a very low activity. The biosynthesis of caldohexamine and caldoheptamine from caldopentamine has been also observed. This is Polyamine aminopropyltransferase from Pyrobaculum aerophilum (strain ATCC 51768 / DSM 7523 / JCM 9630 / CIP 104966 / NBRC 100827 / IM2).